A 196-amino-acid chain; its full sequence is Ribonuclease HII (196 aa).

Residues 9 to 196 (KLVAGVDEVG…KPVRHALGIE (188 aa)) form the RNase H type-2 domain. Residues Asp-15, Glu-16, and Asp-107 each contribute to the a divalent metal cation site.

The protein belongs to the RNase HII family. Mn(2+) is required as a cofactor. Mg(2+) serves as cofactor.

It is found in the cytoplasm. It catalyses the reaction Endonucleolytic cleavage to 5'-phosphomonoester.. Functionally, endonuclease that specifically degrades the RNA of RNA-DNA hybrids. The chain is Ribonuclease HII from Aeromonas salmonicida (strain A449).